A 100-amino-acid polypeptide reads, in one-letter code: Urease subunit gamma (100 aa).

Belongs to the urease gamma subunit family. Heterotrimer of UreA (gamma), UreB (beta) and UreC (alpha) subunits. Three heterotrimers associate to form the active enzyme.

The protein localises to the cytoplasm. The catalysed reaction is urea + 2 H2O + H(+) = hydrogencarbonate + 2 NH4(+). It functions in the pathway nitrogen metabolism; urea degradation; CO(2) and NH(3) from urea (urease route): step 1/1. In Bacillus cereus (strain ATCC 10987 / NRS 248), this protein is Urease subunit gamma.